A 277-amino-acid chain; its full sequence is Putative hydro-lyase BP1875 (277 aa).

It belongs to the D-glutamate cyclase family.

This chain is Putative hydro-lyase BP1875, found in Bordetella pertussis (strain Tohama I / ATCC BAA-589 / NCTC 13251).